We begin with the raw amino-acid sequence, 396 residues long: S-adenosylmethionine synthase (396 aa).

Position 16 (histidine 16) interacts with ATP. Mg(2+) is bound at residue aspartate 18. Residue glutamate 44 coordinates K(+). The L-methionine site is built by glutamate 57 and glutamine 100. The flexible loop stretch occupies residues 100 to 110 (QSPDINQGVDR). ATP is bound by residues 165-167 (DAK), 231-232 (KF), aspartate 240, 246-247 (RK), alanine 263, and lysine 267. Aspartate 240 serves as a coordination point for L-methionine. Residue lysine 271 coordinates L-methionine.

The protein belongs to the AdoMet synthase family. In terms of assembly, homotetramer; dimer of dimers. It depends on Mg(2+) as a cofactor. K(+) is required as a cofactor.

The protein localises to the cytoplasm. It catalyses the reaction L-methionine + ATP + H2O = S-adenosyl-L-methionine + phosphate + diphosphate. Its pathway is amino-acid biosynthesis; S-adenosyl-L-methionine biosynthesis; S-adenosyl-L-methionine from L-methionine: step 1/1. Catalyzes the formation of S-adenosylmethionine (AdoMet) from methionine and ATP. The overall synthetic reaction is composed of two sequential steps, AdoMet formation and the subsequent tripolyphosphate hydrolysis which occurs prior to release of AdoMet from the enzyme. This chain is S-adenosylmethionine synthase, found in Ectopseudomonas mendocina (strain ymp) (Pseudomonas mendocina).